The sequence spans 673 residues: DNA ligase (673 aa).

NAD(+)-binding positions include 34 to 38 (DAEYD), 83 to 84 (SL), and Glu-116. The active-site N6-AMP-lysine intermediate is the Lys-118. Arg-139, Glu-176, Lys-293, and Lys-317 together coordinate NAD(+). Residues Cys-411, Cys-414, Cys-429, and Cys-435 each coordinate Zn(2+). Residues 595–673 (NQQNPFFGKT…EDEFLKWVNS (79 aa)) form the BRCT domain.

This sequence belongs to the NAD-dependent DNA ligase family. LigA subfamily. It depends on Mg(2+) as a cofactor. The cofactor is Mn(2+).

The catalysed reaction is NAD(+) + (deoxyribonucleotide)n-3'-hydroxyl + 5'-phospho-(deoxyribonucleotide)m = (deoxyribonucleotide)n+m + AMP + beta-nicotinamide D-nucleotide.. Its function is as follows. DNA ligase that catalyzes the formation of phosphodiester linkages between 5'-phosphoryl and 3'-hydroxyl groups in double-stranded DNA using NAD as a coenzyme and as the energy source for the reaction. It is essential for DNA replication and repair of damaged DNA. The protein is DNA ligase of Legionella pneumophila (strain Paris).